The primary structure comprises 132 residues: L-ectoine synthase (132 aa).

The protein belongs to the ectoine synthase family.

The enzyme catalyses (2S)-4-acetamido-2-aminobutanoate = L-ectoine + H2O. The protein operates within amine and polyamine biosynthesis; ectoine biosynthesis; L-ectoine from L-aspartate 4-semialdehyde: step 3/3. In terms of biological role, catalyzes the circularization of gamma-N-acetyl-alpha,gamma-diaminobutyric acid (ADABA) to ectoine (1,4,5,6-tetrahydro-2-methyl-4-pyrimidine carboxylic acid), which is an excellent osmoprotectant. The sequence is that of L-ectoine synthase (ectC) from Streptomyces anulatus (Streptomyces chrysomallus).